Here is a 227-residue protein sequence, read N- to C-terminus: Cytidylate kinase (227 aa).

Residue 12 to 20 coordinates ATP; the sequence is GPSGAGKGT.

This sequence belongs to the cytidylate kinase family. Type 1 subfamily.

It localises to the cytoplasm. The enzyme catalyses CMP + ATP = CDP + ADP. It carries out the reaction dCMP + ATP = dCDP + ADP. The polypeptide is Cytidylate kinase (Salmonella choleraesuis (strain SC-B67)).